The chain runs to 154 residues: MAARLCCQLDPARDVLCLRPVGAESRGRPVSGPFGPLPSPSSSAVPADHGAHLSLRGLPVCAFSSAGPCALRFTSARSMETTVNAHQVLPKVLHKRTLGLSAMSTTDLEAYFKDCLFKDWEELGEEIRLKVFVLGGCRHKLVCSPAPCNFFPSA.

A mitochondrial targeting sequence region spans residues 68–117 (PCALRFTSARSMETTVNAHQVLPKVLHKRTLGLSAMSTTDLEAYFKDCLF).

This sequence belongs to the orthohepadnavirus protein X family. May form homodimer. May interact with host CEBPA, CFLAR, CREB1, DDB1, E4F1, HBXIP, HSPD1/HSP60, NFKBIA, POLR2E and SMAD4. Interacts with host SMC5-SMC6 complex and induces its degradation. Interacts with host TRPC4AP; leading to prevent ubiquitination of TRPC4AP. Interacts with host PLSCR1; this interaction promotes ubiquitination and degradation of HBx and impairs HBx-mediated cell proliferation. A fraction may be phosphorylated in insect cells and HepG2 cells, a human hepatoblastoma cell line. Phosphorylated in vitro by host protein kinase C or mitogen-activated protein kinase. N-acetylated in insect cells.

It localises to the host cytoplasm. Its subcellular location is the host nucleus. The protein resides in the host mitochondrion. Its function is as follows. Multifunctional protein that plays a role in silencing host antiviral defenses and promoting viral transcription. Does not seem to be essential for HBV infection. May be directly involved in development of cirrhosis and liver cancer (hepatocellular carcinoma). Most of cytosolic activities involve modulation of cytosolic calcium. The effect on apoptosis is controversial depending on the cell types in which the studies have been conducted. May induce apoptosis by localizing in mitochondria and causing loss of mitochondrial membrane potential. May also modulate apoptosis by binding host CFLAR, a key regulator of the death-inducing signaling complex (DISC). Promotes viral transcription by using the host E3 ubiquitin ligase DDB1 to target the SMC5-SMC6 complex to proteasomal degradation. This host complex would otherwise bind to viral episomal DNA, and prevents its transcription. Moderately stimulates transcription of many different viral and cellular transcription elements. Promoters and enhancers stimulated by HBx contain DNA binding sites for NF-kappa-B, AP-1, AP-2, c-EBP, ATF/CREB, or the calcium-activated factor NF-AT. In Homo sapiens (Human), this protein is Protein X.